The chain runs to 546 residues: MHTPGTPAPGHPDPPPLLLLTLLLLLAASGRAVPCVFCGLPKPTNITFLSINMKNVLHWNPPESLHGVEVTYTVQYFIYGQKKWLNASKCGSINRTYCDLSVETSDYEHQFYAKVKAIWEARCSEWAETERFYPFLETQVSPPEVALTTGEKSISIALTAPEKWKRNPQDHTVSMQQIYPNLKYNVSVYNTKSRRTWSQCVTNSTLVLSWLEPNTLYCVHVESLVPGPPRLPMPSQKQCISTLEVQTSAWKAKVIFWYVFLTSVIVFLFSAIGYLVYRYIHVGKEKHPANLVLIYRNEIGTRVFEPTETITLNFITFSMLDDTKISPKDMNLLDKSSDDISVNDPEHNEAWEPHWEEVEGQHLGCSSHLMDAVCGAEQRDGDTSLTQHGWLNSTIPTGETDTEPQYKVLSDFYGEGEIQLSCEPEEAARTEKISEPLVTSANLDPQLEDLHHLGQEHTVSEDGPEEETSITVVDWDPQTGRLCIPSLPIFGRDPENYGHYERDQLLEGGLLSRLYENQAPDKPEKENENCLTRFMEEWGLHVQMES.

Positions 1–32 (MHTPGTPAPGHPDPPPLLLLTLLLLLAASGRA) are cleaved as a signal peptide. Residues 33-253 (VPCVFCGLPK…EVQTSAWKAK (221 aa)) are Extracellular-facing. 2 Fibronectin type-III domains span residues 42–138 (KPTN…FLET) and 139–245 (QVSP…TLEV). Residues asparagine 45, asparagine 86, asparagine 94, asparagine 185, and asparagine 203 are each glycosylated (N-linked (GlcNAc...) asparagine). Cysteine 90 and cysteine 98 are joined by a disulfide. Cysteine 218 and cysteine 239 are disulfide-bonded. A helical membrane pass occupies residues 254 to 274 (VIFWYVFLTSVIVFLFSAIGY). Over 275–546 (LVYRYIHVGK…EWGLHVQMES (272 aa)) the chain is Cytoplasmic.

Belongs to the type II cytokine receptor family. As to quaternary structure, heterodimer with IL20RB and heterodimer with IL10RB.

The protein localises to the membrane. Functionally, the IL20RA/IL20RB dimer is a receptor for IL19, IL20 and IL24. The IL20RA/IL10RB dimer is a receptor for IL26. This is Interleukin-20 receptor subunit alpha (Il20ra) from Mus musculus (Mouse).